An 849-amino-acid polypeptide reads, in one-letter code: MKGVDDAFLGVGDKPGLDIWCIMGSNLIAIEKSLHGKFYTGNTYIILSTVELKSGVRQHNVHYWVGEEAKEEDCLTASDKAIELDVALGSNTVQYRETQGEESDKFLSYFKPCIIPIQGSLSSHMRIYGDKSKDTTMFRCEGEHVARVTEVPFSRSSLDHKAVFVVDTESKIFLFSGCNSSMQTRAKALDVVKHLKENRHCGRCEIATIEDGKLVGDSDAGDFWNLFGGYAPIPRDVQDTVMTELMTTSSKKLFWINKRNLVPVETNLLEREMLNSDRNYILDCGTEVFLWMGMTTLVSERRTSVTALEDYVRCEGRQSNARSVILTEGHETVEFKMHFQHWPKNAVPKLYEAGREKVAAIFKHQGYDVTEIPEDKPRHFISCNGSLKVWLVDNGSVTLLCTEEQEQLYNGDCYIIRYSYIEDGKDYHLFFAWSGLNSINEDRVAAASLMSGMIDSVKGHAVVAQVFEGREPEMFFLVFKSLIIFKGGRSMAYKNFVSQRSDANGWYQKNGVALFRVQGLKHDCIRAIQVDLAASSLNSSHCYILQAGGSFFTWLGSLSSPSDHNLLDRMMDKLCPLKQSLLVREGSEPDRFWEALGGRSEYSKEKQVKDWPADPHLYTCHFEQGLFKAKEVFSFSQDDLVTEEILILDCVEELHIWVGHQSGVLSMEQALDIGKMFLQAGIHQDGRRPIDTTMYIVTEGDEPRFFTSFFNWDYSKQTMLGNSFERKLAILKGISQKLETPERSLRKSSSSSLPRRSPGTSSSEPTTPEQRAAARTFASASTGKLLRERSPAALSPSLSTPSPSPRSRSSASSSPASWNSTPSTVARRLFPPSLHASAEAVATGTPRRL.

Gelsolin-like repeat units lie at residues 30 to 107 (IEKS…DKFL), 147 to 213 (RVTE…EDGK), 262 to 335 (VPVE…TVEF), 405 to 475 (QEQL…PEMF), and 527 to 566 (AIQV…DHNL). The interval 739-849 (ETPERSLRKS…AVATGTPRRL (111 aa)) is disordered. 2 stretches are compositionally biased toward low complexity: residues 747 to 782 (KSSS…SAST) and 791 to 823 (PAAL…STPS).

This sequence belongs to the villin/gelsolin family.

Its subcellular location is the cytoplasm. It localises to the cytoskeleton. Its function is as follows. Ca(2+)-independent actin-binding protein. Binds actin microfilaments (MFs). Involved in actin filament bundling, severing and capping. Caps the barbed end of actin filaments and protects them from disassembly. Promotes VLN3-mediated MF severing. In Oryza sativa subsp. indica (Rice), this protein is Villin-1.